The primary structure comprises 149 residues: Glycine cleavage system H protein (149 aa).

Residues 23-104 (LIWVGISNHA…PYGIWLFKIN (82 aa)) enclose the Lipoyl-binding domain. K64 carries the N6-lipoyllysine modification.

This sequence belongs to the GcvH family. The glycine cleavage system is composed of four proteins: P, T, L and H. (R)-lipoate is required as a cofactor.

The glycine cleavage system catalyzes the degradation of glycine. The H protein shuttles the methylamine group of glycine from the P protein to the T protein. In Polynucleobacter necessarius subsp. necessarius (strain STIR1), this protein is Glycine cleavage system H protein.